Consider the following 143-residue polypeptide: Large ribosomal subunit protein uL11 (143 aa).

It belongs to the universal ribosomal protein uL11 family. As to quaternary structure, part of the ribosomal stalk of the 50S ribosomal subunit. Interacts with L10 and the large rRNA to form the base of the stalk. L10 forms an elongated spine to which L12 dimers bind in a sequential fashion forming a multimeric L10(L12)X complex. One or more lysine residues are methylated.

Forms part of the ribosomal stalk which helps the ribosome interact with GTP-bound translation factors. This is Large ribosomal subunit protein uL11 from Borrelia garinii subsp. bavariensis (strain ATCC BAA-2496 / DSM 23469 / PBi) (Borreliella bavariensis).